The following is a 126-amino-acid chain: Putative phosphotransferase enzyme IIB component UU178 (126 aa).

Residues 11–31 (LIIFLGIITFGIFIIYFFTKA) form a helical membrane-spanning segment. Positions 49–126 (PFSLNDFYNC…KELIKKDLFS (78 aa)) constitute a PTS EIIB type-1 domain.

The protein to M.genitalium MG129 and M.pneumoniae MPN268.

The protein resides in the membrane. Functionally, the phosphoenolpyruvate-dependent sugar phosphotransferase system (PTS), a major carbohydrate active -transport system, catalyzes the phosphorylation of incoming sugar substrates concomitant with their translocation across the cell membrane. This is Putative phosphotransferase enzyme IIB component UU178 from Ureaplasma parvum serovar 3 (strain ATCC 700970).